The primary structure comprises 237 residues: Phosphoribosylaminoimidazole-succinocarboxamide synthase (237 aa).

It belongs to the SAICAR synthetase family.

It catalyses the reaction 5-amino-1-(5-phospho-D-ribosyl)imidazole-4-carboxylate + L-aspartate + ATP = (2S)-2-[5-amino-1-(5-phospho-beta-D-ribosyl)imidazole-4-carboxamido]succinate + ADP + phosphate + 2 H(+). The protein operates within purine metabolism; IMP biosynthesis via de novo pathway; 5-amino-1-(5-phospho-D-ribosyl)imidazole-4-carboxamide from 5-amino-1-(5-phospho-D-ribosyl)imidazole-4-carboxylate: step 1/2. The protein is Phosphoribosylaminoimidazole-succinocarboxamide synthase of Marinobacter nauticus (strain ATCC 700491 / DSM 11845 / VT8) (Marinobacter aquaeolei).